We begin with the raw amino-acid sequence, 20 residues long: Superoxide dismutase [Mn], mitochondrial (20 aa).

Belongs to the iron/manganese superoxide dismutase family. Homotetramer. Requires Mn(2+) as cofactor.

The protein localises to the mitochondrion matrix. It carries out the reaction 2 superoxide + 2 H(+) = H2O2 + O2. Its function is as follows. Destroys superoxide anion radicals which are normally produced within the cells and which are toxic to biological systems. This is Superoxide dismutase [Mn], mitochondrial (SODA) from Hordeum vulgare (Barley).